We begin with the raw amino-acid sequence, 1180 residues long: uncharacterized protein (1180 aa).

Disordered regions lie at residues 229–280, 431–465, 484–575, 730–758, 810–986, 1045–1109, and 1125–1152; these read RQQG…DTSI, KQPP…PPLK, SRDT…PNMR, GRPL…ASRT, GKAE…ASWD, RLQE…ELEM, and ERLE…QKEE. Over residues 269–279 the composition is skewed to acidic residues; the sequence is QEDETQAEDTS. Basic residues predominate over residues 431–443; sequence KQPPKEKAHRRGA. Over residues 486–497 the composition is skewed to polar residues; it reads DTLSPQGSSSLP. Positions 509–518 are enriched in basic residues; it reads SKARHTRVHS. Basic and acidic residues-rich tracts occupy residues 730 to 745, 826 to 837, and 846 to 856; these read GRPL…DPEP, SHERDLINEAKR, and TKGPKSEREGK. The segment covering 872–889 has biased composition (basic residues); the sequence is KAKKKLEKKTRPQRKRTQ. Over residues 937–959 the composition is skewed to polar residues; the sequence is QESQVSLDGRSSPSQIATVTGNM. 3 stretches are compositionally biased toward basic and acidic residues: residues 960–986, 1045–1106, and 1127–1152; these read ESKE…ASWD, RLQE…RQEE, and LEYQ…QKEE. A coiled-coil region spans residues 988 to 1171; that stretch reads LRAERAEMRW…ATKQAQEQAR (184 aa).

This is an uncharacterized protein from Homo sapiens (Human).